A 210-amino-acid chain; its full sequence is Superoxide dismutase [Mn], mitochondrial (210 aa).

Residues H29, H77, D163, and H167 each coordinate Mn(2+).

It belongs to the iron/manganese superoxide dismutase family. In terms of assembly, homotetramer. Requires Mn(2+) as cofactor.

The protein localises to the mitochondrion matrix. The catalysed reaction is 2 superoxide + 2 H(+) = H2O2 + O2. Destroys superoxide anion radicals which are normally produced within the cells and which are toxic to biological systems. The sequence is that of Superoxide dismutase [Mn], mitochondrial (sodB) from Aspergillus fumigatus (strain ATCC MYA-4609 / CBS 101355 / FGSC A1100 / Af293) (Neosartorya fumigata).